The following is a 325-amino-acid chain: Beta-ketoacyl-[acyl-carrier-protein] synthase III (325 aa).

Residues cysteine 116 and histidine 252 contribute to the active site. Positions 253–257 (QANLR) are ACP-binding. Asparagine 282 is an active-site residue.

The protein belongs to the thiolase-like superfamily. FabH family. Homodimer.

The protein localises to the cytoplasm. It carries out the reaction malonyl-[ACP] + acetyl-CoA + H(+) = 3-oxobutanoyl-[ACP] + CO2 + CoA. The protein operates within lipid metabolism; fatty acid biosynthesis. Functionally, catalyzes the condensation reaction of fatty acid synthesis by the addition to an acyl acceptor of two carbons from malonyl-ACP. Catalyzes the first condensation reaction which initiates fatty acid synthesis and may therefore play a role in governing the total rate of fatty acid production. Possesses both acetoacetyl-ACP synthase and acetyl transacylase activities. Its substrate specificity determines the biosynthesis of branched-chain and/or straight-chain of fatty acids. In Xanthomonas euvesicatoria pv. vesicatoria (strain 85-10) (Xanthomonas campestris pv. vesicatoria), this protein is Beta-ketoacyl-[acyl-carrier-protein] synthase III.